A 315-amino-acid polypeptide reads, in one-letter code: MSEEKKQWSISDIEAIYQQPFNDLLYQAHTIHRTYHDPNSLQFATLLSIKTGACPEDCGYCSQSGHYKTHVEKEKLMSVEEVLQCAKEAKEGGAKRFCMGAAWRCPPDKAIPQLKEMIEGVKSLGLETCMTLGMLTKEQASHLKEAGLDYYNHNIDTSPSYYDKVVTTRKFSDRLDTLNNVRSAGINVCCGGILGLGETREDRIEFLLTLANMETPPESVPINRLIPVEGTPLAQAERVEGIELVRTIATARILMPKSAIRLTAGRTEMSDELQALCYFAGANSVFIGDKLLTEDNPQRFKDKTLFNKLGLTEMV.

Residues 39–266 form the Radical SAM core domain; that stretch reads NSLQFATLLS…KSAIRLTAGR (228 aa). Residues Cys-54, Cys-58, and Cys-61 each coordinate [4Fe-4S] cluster. [2Fe-2S] cluster-binding residues include Cys-98, Cys-129, Cys-189, and Arg-261.

This sequence belongs to the radical SAM superfamily. Biotin synthase family. Homodimer. It depends on [4Fe-4S] cluster as a cofactor. The cofactor is [2Fe-2S] cluster.

It carries out the reaction (4R,5S)-dethiobiotin + (sulfur carrier)-SH + 2 reduced [2Fe-2S]-[ferredoxin] + 2 S-adenosyl-L-methionine = (sulfur carrier)-H + biotin + 2 5'-deoxyadenosine + 2 L-methionine + 2 oxidized [2Fe-2S]-[ferredoxin]. Its pathway is cofactor biosynthesis; biotin biosynthesis; biotin from 7,8-diaminononanoate: step 2/2. In terms of biological role, catalyzes the conversion of dethiobiotin (DTB) to biotin by the insertion of a sulfur atom into dethiobiotin via a radical-based mechanism. The protein is Biotin synthase of Legionella pneumophila (strain Paris).